We begin with the raw amino-acid sequence, 343 residues long: GTP 3',8-cyclase (343 aa).

Residues 19–244 (PYGRTISYLR…TDVDDSTGGP (226 aa)) enclose the Radical SAM core domain. Arginine 28 is a GTP binding site. [4Fe-4S] cluster-binding residues include cysteine 35 and cysteine 39. Tyrosine 41 is a binding site for S-adenosyl-L-methionine. Cysteine 42 contacts [4Fe-4S] cluster. Arginine 77 is a binding site for GTP. Glycine 81 is a binding site for S-adenosyl-L-methionine. Threonine 111 lines the GTP pocket. An S-adenosyl-L-methionine-binding site is contributed by serine 135. Lysine 171 is a binding site for GTP. Residue methionine 205 coordinates S-adenosyl-L-methionine. [4Fe-4S] cluster is bound by residues cysteine 268 and cysteine 271. 273 to 275 (RVR) is a GTP binding site. Cysteine 285 lines the [4Fe-4S] cluster pocket.

This sequence belongs to the radical SAM superfamily. MoaA family. In terms of assembly, monomer and homodimer. It depends on [4Fe-4S] cluster as a cofactor.

It catalyses the reaction GTP + AH2 + S-adenosyl-L-methionine = (8S)-3',8-cyclo-7,8-dihydroguanosine 5'-triphosphate + 5'-deoxyadenosine + L-methionine + A + H(+). Its pathway is cofactor biosynthesis; molybdopterin biosynthesis. In terms of biological role, catalyzes the cyclization of GTP to (8S)-3',8-cyclo-7,8-dihydroguanosine 5'-triphosphate. The polypeptide is GTP 3',8-cyclase (Nitrobacter hamburgensis (strain DSM 10229 / NCIMB 13809 / X14)).